A 152-amino-acid chain; its full sequence is Interleukin-3 (152 aa).

Residues 1-19 (MSRLPVLLLLQLLVRPGLQ) form the signal peptide. 2 N-linked (GlcNAc...) asparagine glycosylation sites follow: Asn-34 and Asn-89. A disulfide bond links Cys-35 and Cys-103.

It belongs to the IL-3 family. In terms of assembly, monomer. As to expression, activated T-cells, mast cells, natural killer cells.

The protein resides in the secreted. Functionally, granulocyte/macrophage colony-stimulating factors are cytokines that act in hematopoiesis by controlling the production, differentiation, and function of 2 related white cell populations of the blood, the granulocytes and the monocytes-macrophages. In terms of biological role, this CSF induces granulocytes, macrophages, mast cells, stem cells, erythroid cells, eosinophils and megakaryocytes. This Pan troglodytes (Chimpanzee) protein is Interleukin-3 (IL3).